The chain runs to 500 residues: Probable cytochrome P450 514A2 (500 aa).

The helical transmembrane segment at 4–24 (IYTIILTIIILVLIISIKDLF) threads the bilayer. C446 serves as a coordination point for heme.

This sequence belongs to the cytochrome P450 family. Heme serves as cofactor.

The protein resides in the membrane. In Dictyostelium discoideum (Social amoeba), this protein is Probable cytochrome P450 514A2 (cyp514A2).